The sequence spans 398 residues: Argininosuccinate synthase (398 aa).

Residue 8–16 participates in ATP binding; it reads AYSGGLDTS. Residue Y87 coordinates L-citrulline. G117 contributes to the ATP binding site. L-aspartate contacts are provided by T119, N123, and D124. Residue N123 participates in L-citrulline binding. L-citrulline-binding residues include R127, S175, E260, and Y272.

The protein belongs to the argininosuccinate synthase family. Type 1 subfamily. Homotetramer.

The protein resides in the cytoplasm. It carries out the reaction L-citrulline + L-aspartate + ATP = 2-(N(omega)-L-arginino)succinate + AMP + diphosphate + H(+). Its pathway is amino-acid biosynthesis; L-arginine biosynthesis; L-arginine from L-ornithine and carbamoyl phosphate: step 2/3. This Mycobacterium ulcerans (strain Agy99) protein is Argininosuccinate synthase.